Here is a 200-residue protein sequence, read N- to C-terminus: Prolactin-2 (200 aa).

The signal sequence occupies residues 1-23 (MRQRRISGSNLMMVLCVVAMCRA). Cystine bridges form between cysteine 64-cysteine 173 and cysteine 190-cysteine 200.

This sequence belongs to the somatotropin/prolactin family.

The protein localises to the secreted. The protein is Prolactin-2 (prl2) of Oreochromis mossambicus (Mozambique tilapia).